The primary structure comprises 400 residues: Phosphoglycerate kinase (400 aa).

Residues 21–23 (DLN), Arg36, 59–62 (HLGR), Arg116, and Arg149 each bind substrate. Residues Lys200, Glu317, and 343 to 346 (GGDT) each bind ATP.

Belongs to the phosphoglycerate kinase family. In terms of assembly, monomer.

Its subcellular location is the cytoplasm. It carries out the reaction (2R)-3-phosphoglycerate + ATP = (2R)-3-phospho-glyceroyl phosphate + ADP. It participates in carbohydrate degradation; glycolysis; pyruvate from D-glyceraldehyde 3-phosphate: step 2/5. The sequence is that of Phosphoglycerate kinase from Blochmanniella floridana.